The sequence spans 401 residues: Phosphoglycerate kinase (401 aa).

Substrate is bound by residues 29 to 31 (DFN), arginine 45, 69 to 72 (HLGR), arginine 125, and arginine 158. ATP is bound by residues lysine 209, glutamate 331, and 357–360 (GGDT).

This sequence belongs to the phosphoglycerate kinase family. In terms of assembly, monomer.

The protein localises to the cytoplasm. It catalyses the reaction (2R)-3-phosphoglycerate + ATP = (2R)-3-phospho-glyceroyl phosphate + ADP. The protein operates within carbohydrate degradation; glycolysis; pyruvate from D-glyceraldehyde 3-phosphate: step 2/5. The protein is Phosphoglycerate kinase of Wolinella succinogenes (strain ATCC 29543 / DSM 1740 / CCUG 13145 / JCM 31913 / LMG 7466 / NCTC 11488 / FDC 602W) (Vibrio succinogenes).